Reading from the N-terminus, the 183-residue chain is MFKLVRAKGIVRIPPEYFGQSVDEIAIKILRQEYQEKLIKDIGVVLGIVNAKASEEGFIIFGDGATYHEVEFDMLVYTPIIHEVIEGEVSQVDNYGVYVNMGPVDGLVHISQITDDNLKFDSNRGILIGEKSKKSIQKGDRVRAMIISASMSSGRLPRIALTMKQPYLGKIEWINQEIAKASK.

The region spanning 82–164 is the S1 motif domain; the sequence is HEVIEGEVSQ…RLPRIALTMK (83 aa).

This sequence belongs to the eukaryotic RPB7/RPC8 RNA polymerase subunit family. As to quaternary structure, part of the 13-subunit RNA polymerase complex. Forms a stalk with Rpo4 that extends from the main structure.

It is found in the cytoplasm. It catalyses the reaction RNA(n) + a ribonucleoside 5'-triphosphate = RNA(n+1) + diphosphate. Its function is as follows. DNA-dependent RNA polymerase (RNAP) catalyzes the transcription of DNA into RNA using the four ribonucleoside triphosphates as substrates. Functionally, reconstitution experiments show this subunit is required for basic activity. This is DNA-directed RNA polymerase subunit Rpo7 from Sulfolobus acidocaldarius (strain ATCC 33909 / DSM 639 / JCM 8929 / NBRC 15157 / NCIMB 11770).